The chain runs to 664 residues: RNA-binding protein RMD9, mitochondrial (664 aa).

The transit peptide at 1 to 32 directs the protein to the mitochondrion; the sequence is MFRLVQQQTLKSRVPNQFVSASRNSLNSQFRF. The segment at 38–68 is disordered; it reads LERNPQQDPTTAAPAKSSSDKRNSKKKYENN. A compositionally biased stretch (basic and acidic residues) spans 55–68; the sequence is SSDKRNSKKKYENN.

It belongs to the RMD9 family. In terms of assembly, monomer. In terms of processing, phosphorylated. Phosphorylation promotes binding to RNA.

The protein localises to the mitochondrion inner membrane. Binds the 3'-UTR of mitochondrial mRNAs. Involved in the processing or stability of mitochondrial mRNAs. This Kluyveromyces lactis (strain ATCC 8585 / CBS 2359 / DSM 70799 / NBRC 1267 / NRRL Y-1140 / WM37) (Yeast) protein is RNA-binding protein RMD9, mitochondrial (RMD9).